Reading from the N-terminus, the 301-residue chain is Lipoyl synthase (301 aa).

[4Fe-4S] cluster-binding residues include C53, C58, C64, C79, C83, C86, and S290. The region spanning 65–279 (WSRKTATYML…RIYGKSIGFK (215 aa)) is the Radical SAM core domain.

This sequence belongs to the radical SAM superfamily. Lipoyl synthase family. [4Fe-4S] cluster is required as a cofactor.

It localises to the cytoplasm. It catalyses the reaction [[Fe-S] cluster scaffold protein carrying a second [4Fe-4S](2+) cluster] + N(6)-octanoyl-L-lysyl-[protein] + 2 oxidized [2Fe-2S]-[ferredoxin] + 2 S-adenosyl-L-methionine + 4 H(+) = [[Fe-S] cluster scaffold protein] + N(6)-[(R)-dihydrolipoyl]-L-lysyl-[protein] + 4 Fe(3+) + 2 hydrogen sulfide + 2 5'-deoxyadenosine + 2 L-methionine + 2 reduced [2Fe-2S]-[ferredoxin]. The protein operates within protein modification; protein lipoylation via endogenous pathway; protein N(6)-(lipoyl)lysine from octanoyl-[acyl-carrier-protein]: step 2/2. In terms of biological role, catalyzes the radical-mediated insertion of two sulfur atoms into the C-6 and C-8 positions of the octanoyl moiety bound to the lipoyl domains of lipoate-dependent enzymes, thereby converting the octanoylated domains into lipoylated derivatives. The sequence is that of Lipoyl synthase from Leptospira interrogans serogroup Icterohaemorrhagiae serovar copenhageni (strain Fiocruz L1-130).